A 127-amino-acid polypeptide reads, in one-letter code: Small ribosomal subunit protein uS12m (127 aa).

The protein belongs to the universal ribosomal protein uS12 family.

The protein localises to the mitochondrion. This Acanthamoeba castellanii (Amoeba) protein is Small ribosomal subunit protein uS12m (RPS12).